A 34-amino-acid chain; its full sequence is Photosystem II reaction center protein M (34 aa).

The helical transmembrane segment at 5–25 threads the bilayer; it reads ILAFIATALFILIPTAFSLIL.

This sequence belongs to the PsbM family. As to quaternary structure, PSII is composed of 1 copy each of membrane proteins PsbA, PsbB, PsbC, PsbD, PsbE, PsbF, PsbH, PsbI, PsbJ, PsbK, PsbL, PsbM, PsbT, PsbX, PsbY, PsbZ, Psb30/Ycf12, at least 3 peripheral proteins of the oxygen-evolving complex and a large number of cofactors. It forms dimeric complexes.

The protein resides in the plastid. It localises to the chloroplast thylakoid membrane. Its function is as follows. One of the components of the core complex of photosystem II (PSII). PSII is a light-driven water:plastoquinone oxidoreductase that uses light energy to abstract electrons from H(2)O, generating O(2) and a proton gradient subsequently used for ATP formation. It consists of a core antenna complex that captures photons, and an electron transfer chain that converts photonic excitation into a charge separation. This subunit is found at the monomer-monomer interface. The protein is Photosystem II reaction center protein M of Huperzia lucidula (Shining clubmoss).